The chain runs to 430 residues: Evolutionarily conserved signaling intermediate in Toll pathway, mitochondrial (430 aa).

Residues 1 to 48 (MSWVQATLLARGLCRAWGGICRAALPGTSISQVPRQLPRGLHCSAAPH) constitute a mitochondrion transit peptide. Residues 41–66 (LHCSAAPHSSEQSLVSSPPEPRQRPT) are disordered. Residues 47 to 56 (PHSSEQSLVS) show a composition bias toward polar residues. Residue K372 forms a Glycyl lysine isopeptide (Lys-Gly) (interchain with G-Cter in ubiquitin) linkage. Residues 400–430 (LHTSSAGLEEPPPPEDHEEDDSRQRQQQGQS) form a disordered region. Residues 411-420 (PPPEDHEEDD) are compositionally biased toward acidic residues.

This sequence belongs to the ECSIT family. Interacts with MAP3K1, SMAD4 and TRAF6. Interacts with SMAD1 only after BMP4-treatment. Part of the mitochondrial complex I assembly/MCIA complex that comprises at least the core subunits TMEM126B, NDUFAF1, ECSIT and ACAD9 and complement subunits such as COA1 and TMEM186. Interacts with NDUFAF1. Interacts with ACAD9. Interacts with TRIM59. Interacts with TMEM70 and TMEM242. Interacts (when ubiquitinated) with NF-kappa-B subunits RELA and NFKB1. Interacts with RIGI, IFIT1 and MAVS; these interactions promote RLR-mediated type I IFN induction. Interacts with SQSTM1; this interaction inhibits TLR4 signaling via functional regulation of the TRAF6-ECSIT complex. Interacts with cereblon/CRBN; this interaction inhibits the ubiquitination of ECSIT. Post-translationally, ubiquitinated on Lys-372; leading to translocation in the nucleus together with RELA and NFKB1 and expression of NF-kappa-B-dependent genes.

It is found in the cytoplasm. The protein resides in the nucleus. Its subcellular location is the mitochondrion. Adapter protein that plays a role in different signaling pathways including TLRs and IL-1 pathways or innate antiviral induction signaling. Plays a role in the activation of NF-kappa-B by forming a signal complex with TRAF6 and TAK1/MAP3K7 to activate TAK1/MAP3K7 leading to activation of IKKs. Once ubiquitinated, interacts with the dissociated RELA and NFKB1 proteins and translocates to the nucleus where it induces NF-kappa-B-dependent gene expression. Plays a role in innate antiviral immune response by bridging the pattern recognition receptors RIGI and MDA5/IFIT1 to the MAVS complex at the mitochondrion. Promotes proteolytic activation of MAP3K1. Involved in the BMP signaling pathway. Required for normal embryonic development. Functionally, as part of the MCIA complex, involved in the assembly of the mitochondrial complex I. The polypeptide is Evolutionarily conserved signaling intermediate in Toll pathway, mitochondrial (Macaca fascicularis (Crab-eating macaque)).